A 589-amino-acid polypeptide reads, in one-letter code: ATP-dependent lipid A-core flippase (589 aa).

The next 5 membrane-spanning stretches (helical) occupy residues 29 to 49 (WLLV…STFL), 68 to 88 (ALWL…AGYI), 157 to 177 (VIGA…AILL), 254 to 274 (ISSA…LLIA), and 283 to 303 (LSPG…PALK). Residues 32-314 (VVAACGALLE…LTNVQNMLQS (283 aa)) enclose the ABC transmembrane type-1 domain. In terms of domain architecture, ABC transporter spans 346-582 (IEFRGITARY…DGLYAYLYSM (237 aa)). 380-387 (GRSGSGKS) serves as a coordination point for ATP.

It belongs to the ABC transporter superfamily. Lipid exporter (TC 3.A.1.106) family. In terms of assembly, homodimer.

It localises to the cell inner membrane. It catalyses the reaction ATP + H2O + lipid A-core oligosaccharideSide 1 = ADP + phosphate + lipid A-core oligosaccharideSide 2.. Its function is as follows. Involved in lipopolysaccharide (LPS) biosynthesis. Translocates lipid A-core from the inner to the outer leaflet of the inner membrane. Transmembrane domains (TMD) form a pore in the inner membrane and the ATP-binding domain (NBD) is responsible for energy generation. This chain is ATP-dependent lipid A-core flippase, found in Xylella fastidiosa (strain Temecula1 / ATCC 700964).